A 204-amino-acid polypeptide reads, in one-letter code: Putative AgrB-like protein (204 aa).

The next 4 membrane-spanning stretches (helical) occupy residues 40–60 (IILI…ATGL), 87–107 (LNCT…FQNI), 111–131 (NWIV…FAPA), and 156–176 (LILT…LIMV).

It belongs to the AgrB family.

Its subcellular location is the cell membrane. May be involved in the proteolytic processing of a quorum sensing system signal molecule precursor. This chain is Putative AgrB-like protein, found in Listeria welshimeri serovar 6b (strain ATCC 35897 / DSM 20650 / CCUG 15529 / CIP 8149 / NCTC 11857 / SLCC 5334 / V8).